A 266-amino-acid chain; its full sequence is Hemin import ATP-binding protein HmuV (266 aa).

The 237-residue stretch at 12 to 248 folds into the ABC transporter domain; the sequence is LEANQLSYHV…ETLTRWYQAD (237 aa). Position 44–51 (44–51) interacts with ATP; that stretch reads GPNGAGKS.

This sequence belongs to the ABC transporter superfamily. Heme (hemin) importer (TC 3.A.1.14.5) family. The complex is composed of two ATP-binding proteins (HmuV), two transmembrane proteins (HmuU) and a solute-binding protein (HmuT).

The protein resides in the cell inner membrane. Its function is as follows. Part of the ABC transporter complex HmuTUV involved in hemin import. Responsible for energy coupling to the transport system. In Yersinia enterocolitica, this protein is Hemin import ATP-binding protein HmuV.